The primary structure comprises 419 residues: tRNA (guanine-N(7)-)-methyltransferase non-catalytic subunit wuho (419 aa).

The segment covering Ser51–Glu61 has biased composition (low complexity). The segment at Ser51–Asp75 is disordered. WD repeat units lie at residues Ala87 to Val127, Gly174 to Ser213, and Gly217 to Arg255.

The protein belongs to the WD repeat TRM82 family. As to quaternary structure, forms a heterodimer with the catalytic subunit Mettl1. Interacts with mei-P26 and weakly interacts with bgcn; required for the function or formation of the mei-P26-bgcn-bam-sxl complex. Interacts with nanos; may be involved in mei-P26-dependent derepression of the BMP signaling pathway. Interacts with Myc; the interaction may be mediated by mei-P26 and may be involved in the regulation of ribosome biogenesis. In testis, it is present at high level in hub cells, a niche for germline stem cells of testis. Ubiquitously expressed in all testicular cells throughout spermatogenesis. Ubiquitously expressed in all germline and somatic cells of the ovary.

The protein resides in the nucleus. Its subcellular location is the cytoplasm. It functions in the pathway tRNA modification; N(7)-methylguanine-tRNA biosynthesis. Required for the Mettl1-dependent formation of N(7)-methylguanine at position 46 (m7G46) in tRNA. In the Mettl1-wuho methyltransferase complex, it is required to stabilize and induce conformational changes of the catalytic subunit. Required for binding of nanos mRNA and repression of translation by the mei-P26-bgcn-bam-sxl complex. May cooperate with mei-P26 and nanos to derepress the BMP signaling pathway. May cooperate with mei-P26 to suppress expression of a subset of microRNAs. May cooperate with mei-P26 to regulate bam expression levels in germline cells during gametogenesis. Required to promote mitosis to meiosis transition during gametogenesis. May regulate germline cell division in part by regulating ribosome biogenesis. The polypeptide is tRNA (guanine-N(7)-)-methyltransferase non-catalytic subunit wuho (Drosophila willistoni (Fruit fly)).